Here is a 259-residue protein sequence, read N- to C-terminus: NH(3)-dependent NAD(+) synthetase (259 aa).

An ATP-binding site is contributed by 33–40 (GLSGGIDS). Aspartate 39 lines the Mg(2+) pocket. Arginine 119 contacts deamido-NAD(+). Threonine 139 is a binding site for ATP. Residue glutamate 144 participates in Mg(2+) binding. 2 residues coordinate deamido-NAD(+): lysine 152 and aspartate 159. The ATP site is built by lysine 168 and serine 190. Position 249-250 (249-250 (HK)) interacts with deamido-NAD(+).

This sequence belongs to the NAD synthetase family. Homodimer.

The enzyme catalyses deamido-NAD(+) + NH4(+) + ATP = AMP + diphosphate + NAD(+) + H(+). It participates in cofactor biosynthesis; NAD(+) biosynthesis; NAD(+) from deamido-NAD(+) (ammonia route): step 1/1. Its function is as follows. Catalyzes the ATP-dependent amidation of deamido-NAD to form NAD. Uses ammonia as a nitrogen source. The polypeptide is NH(3)-dependent NAD(+) synthetase (Methanocaldococcus jannaschii (strain ATCC 43067 / DSM 2661 / JAL-1 / JCM 10045 / NBRC 100440) (Methanococcus jannaschii)).